Reading from the N-terminus, the 498-residue chain is Protein MGF 505-5R (498 aa).

The protein belongs to the asfivirus MGF 505 family.

Plays a role in virus cell tropism, and may be required for efficient virus replication in macrophages. The sequence is that of Protein MGF 505-5R from African swine fever virus (strain Badajoz 1971 Vero-adapted) (Ba71V).